Here is a 440-residue protein sequence, read N- to C-terminus: Thymidine phosphorylase (440 aa).

It belongs to the thymidine/pyrimidine-nucleoside phosphorylase family. In terms of assembly, homodimer.

It carries out the reaction thymidine + phosphate = 2-deoxy-alpha-D-ribose 1-phosphate + thymine. Its pathway is pyrimidine metabolism; dTMP biosynthesis via salvage pathway; dTMP from thymine: step 1/2. In terms of biological role, the enzymes which catalyze the reversible phosphorolysis of pyrimidine nucleosides are involved in the degradation of these compounds and in their utilization as carbon and energy sources, or in the rescue of pyrimidine bases for nucleotide synthesis. The polypeptide is Thymidine phosphorylase (Escherichia coli (strain K12 / DH10B)).